A 372-amino-acid polypeptide reads, in one-letter code: Histidinol-phosphate aminotransferase (372 aa).

K229 is modified (N6-(pyridoxal phosphate)lysine).

This sequence belongs to the class-II pyridoxal-phosphate-dependent aminotransferase family. Histidinol-phosphate aminotransferase subfamily. In terms of assembly, homodimer. The cofactor is pyridoxal 5'-phosphate.

It catalyses the reaction L-histidinol phosphate + 2-oxoglutarate = 3-(imidazol-4-yl)-2-oxopropyl phosphate + L-glutamate. It functions in the pathway amino-acid biosynthesis; L-histidine biosynthesis; L-histidine from 5-phospho-alpha-D-ribose 1-diphosphate: step 7/9. This chain is Histidinol-phosphate aminotransferase, found in Bdellovibrio bacteriovorus (strain ATCC 15356 / DSM 50701 / NCIMB 9529 / HD100).